We begin with the raw amino-acid sequence, 736 residues long: 3',5'-cyclic-AMP phosphodiesterase 4B (736 aa).

Disordered regions lie at residues 51–78 (QLPP…TTLP), 189–209 (LHGT…SRVN), and 282–301 (KQND…KKKK). S290 carries the post-translational modification Phosphoserine. The PDEase domain maps to 330-659 (VNTENEDHLA…NWYQSMIPQS (330 aa)). Catalysis depends on H406, which acts as the Proton donor. H406 lines the 3',5'-cyclic AMP pocket. H406 and H410 together coordinate AMP. 4 residues coordinate Zn(2+): H410, H446, D447, and D564. Residues D447, D564, Q615, and F618 each contribute to the AMP site. A Mg(2+)-binding site is contributed by D447. D447 is a Mn(2+) binding site. 3',5'-cyclic AMP-binding residues include Q615 and F618. Phosphoserine is present on residues S659 and S661. Positions 685–736 (DEEDSEGPEKEGEGHSYFSSTKTLCVIDPENRDSLGETDIDIATEDKSPVDT) are disordered.

Belongs to the cyclic nucleotide phosphodiesterase family. PDE4 subfamily. In terms of assembly, interacts with DISC1. Requires Zn(2+) as cofactor. The cofactor is Mg(2+). Mn(2+) serves as cofactor. Expressed in brain, heart, lung and skeletal muscle. Expressed in white blood cells. As to expression, brain-specific isoform.

Its subcellular location is the cytoplasm. It localises to the cell membrane. The enzyme catalyses 3',5'-cyclic AMP + H2O = AMP + H(+). Its pathway is purine metabolism; 3',5'-cyclic AMP degradation; AMP from 3',5'-cyclic AMP: step 1/1. Inhibited by rolipram. In terms of biological role, hydrolyzes the second messenger cAMP, which is a key regulator of many important physiological processes. May be involved in mediating central nervous system effects of therapeutic agents ranging from antidepressants to antiasthmatic and anti-inflammatory agents. This is 3',5'-cyclic-AMP phosphodiesterase 4B from Homo sapiens (Human).